The primary structure comprises 161 residues: Pro-corazonin (161 aa).

A signal peptide spans 1-20; the sequence is MMRLLLLPLFLFTLSMACMG. The residue at position 21 (glutamine 21) is a Pyrrolidone carboxylic acid. The residue at position 31 (asparagine 31) is an Asparagine amide. The propeptide occupies 70-161; that stretch reads LERCLAQLQR…SGEPSVFGKH (92 aa). 2 disordered regions span residues 93 to 125 and 142 to 161; these read NANRPEPDSSDSGSSRNRANNNNENVLYPTPIQ and VAGSGPTGAGSGEPSVFGKH. Residues 102 to 117 show a composition bias toward low complexity; sequence SDSGSSRNRANNNNEN.

The protein belongs to the corazonin family.

The protein resides in the secreted. In terms of biological role, cardioactive peptide. Corazonin is probably involved in the physiological regulation of the heart beat. Clock (Clk) and cycle (cyc) proteins negatively regulate Crz transcription in a cell-specific manner. The polypeptide is Pro-corazonin (Drosophila pseudoobscura pseudoobscura (Fruit fly)).